Here is an 82-residue protein sequence, read N- to C-terminus: Small ribosomal subunit protein bS16 (82 aa).

This sequence belongs to the bacterial ribosomal protein bS16 family.

In Elusimicrobium minutum (strain Pei191), this protein is Small ribosomal subunit protein bS16.